We begin with the raw amino-acid sequence, 679 residues long: Stress-70 protein, mitochondrial (679 aa).

The N-terminal 46 residues, 1-46 (MISASRAAAARLVGAAASRGPTAARHQDSWNGLSHEAFRLVSRRDY), are a transit peptide targeting the mitochondrion. The interaction with NFS1 stretch occupies residues 1-432 (MISASRAAAA…IQGGVLAGDV (432 aa)). Positions 63 and 64 each coordinate ADP. The interval 63–431 (TNSCVAVMEG…AIQGGVLAGD (369 aa)) is nucleotide-binding domain (NBD). Lysine 76 bears the N6-acetyllysine mark. Threonine 87 bears the Phosphothreonine mark. N6-acetyllysine; alternate occurs at positions 135 and 138. N6-succinyllysine; alternate occurs at positions 135 and 138. An N6-acetyllysine modification is found at lysine 143. N6-acetyllysine; alternate is present on lysine 206. The residue at position 206 (lysine 206) is an N6-succinyllysine; alternate. Position 206 is an N6-malonyllysine; alternate (lysine 206). N6-acetyllysine is present on residues lysine 234 and lysine 288. Residue lysine 300 is modified to N6-acetyllysine; alternate. Lysine 300 is modified (N6-succinyllysine; alternate). 3 residues coordinate ADP: glutamate 313, lysine 316, and serine 320. Lysine 368 carries the post-translational modification N6-succinyllysine. ADP contacts are provided by glycine 388 and arginine 391. The residue at position 394 (lysine 394) is an N6-succinyllysine. At serine 408 the chain carries Phosphoserine. The segment at 432–441 (VTDVLLLDVT) is interdomain linker. Positions 432–679 (VTDVLLLDVT…QKEDQKEEKQ (248 aa)) are interaction with FXN and ISCU. The interval 442-679 (PLSLGIETLG…QKEDQKEEKQ (238 aa)) is substrate-binding domain (SBD). Arginine 513 is subject to Omega-N-methylarginine. Lysine 567 and lysine 600 each carry N6-acetyllysine; alternate. Residues lysine 567 and lysine 600 each carry the N6-succinyllysine; alternate modification. Lysine 610 is subject to N6-succinyllysine. Residue lysine 612 is modified to N6-acetyllysine. At lysine 646 the chain carries N6-acetyllysine; alternate. Lysine 646 carries the N6-succinyllysine; alternate modification. The disordered stretch occupies residues 656-679 (ASEREGSGSSGTGEQKEDQKEEKQ). Residues 669 to 679 (EQKEDQKEEKQ) show a composition bias toward basic and acidic residues.

Belongs to the heat shock protein 70 family. In terms of assembly, interacts strongly with the intermediate form of FXN and weakly with its mature form. Interacts with HSCB. Associates with the mitochondrial contact site and cristae organizing system (MICOS) complex, composed of at least MICOS10/MIC10, CHCHD3/MIC19, CHCHD6/MIC25, APOOL/MIC27, IMMT/MIC60, APOO/MIC23/MIC26 and QIL1/MIC13. This complex was also known under the names MINOS or MitOS complex. The MICOS complex associates with mitochondrial outer membrane proteins SAMM50, MTX1, MTX2 and DNAJC11, mitochondrial inner membrane protein TMEM11 and with HSPA9. Interacts with DNLZ, the interaction is required to prevent self-aggregation. Interacts with TESPA1. Interacts with PDPN. Interacts with NFU1, NFS1 and ISCU. Interacts with TP53; the interaction promotes TP53 degradation. Interacts (via SBD domain) with UBXN2A; the interaction with UBXN2A inhibits HSPA9 interaction with and degradation of TP53, thereby promotes TP53 translocation to the nucleus. Interacts with ITPR1 AND VDAC1; this interaction couples ITPR1 to VDAC1. Component of the TIM23 mitochondrial inner membrane pre-sequence translocase complex.

The protein resides in the mitochondrion. It is found in the nucleus. Its subcellular location is the nucleolus. It localises to the cytoplasm. The protein localises to the mitochondrion matrix. It carries out the reaction ATP + H2O = ADP + phosphate + H(+). The chaperone activity is regulated by ATP-induced allosteric coupling of the nucleotide-binding (NBD) and substrate-binding (SBD) domains. ATP binding in the NBD leads to a conformational change in the NBD, which is transferred through the interdomain linker (IDL) to the substrate-binding domain (SBD). This elicits a reduced substrate affinity and a faster substrate exchange rate. Upon hydrolysis of ATP to ADP, the protein undergoes a conformational change that increases its affinity for substrate proteins. It cycles through repeated phases of ATP hydrolysis and nucleotide exchange, facilitating repeated cycles of substrate binding and release. Functions in collaboration with co-chaperones. Functions with the co-chaperone, DNLZ, to maintain solubility and regulate ATP hydrolysis. Nucleotide exchange factors, GRPEL1 and GRPEL2, accelerate nucleotide exchange. Functionally, mitochondrial chaperone that plays a key role in mitochondrial protein import, folding, and assembly. Plays an essential role in the protein quality control system, the correct folding of proteins, the re-folding of misfolded proteins, and the targeting of proteins for subsequent degradation. These processes are achieved through cycles of ATP binding, ATP hydrolysis, and ADP release, mediated by co-chaperones. In mitochondria, it associates with the TIM (translocase of the inner membrane) protein complex to assist in the import and folding of mitochondrial proteins. Plays an important role in mitochondrial iron-sulfur cluster (ISC) biogenesis, interacts with and stabilizes ISC cluster assembly proteins FXN, NFU1, NFS1 and ISCU. Regulates erythropoiesis via stabilization of ISC assembly. Regulates mitochondrial calcium-dependent apoptosis by coupling two calcium channels, ITPR1 and VDAC1, at the mitochondria-associated endoplasmic reticulum (ER) membrane to facilitate calcium transport from the ER lumen to the mitochondria intermembrane space, providing calcium for the downstream calcium channel MCU, which releases it into the mitochondrial matrix. Although primarily located in the mitochondria, it is also found in other cellular compartments. In the cytosol, it associates with proteins involved in signaling, apoptosis, or senescence. It may play a role in cell cycle regulation via its interaction with and promotion of degradation of TP53. May play a role in the control of cell proliferation and cellular aging. Protects against reactive oxygen species (ROS). Extracellular HSPA9 plays a cytoprotective role by preventing cell lysis following immune attack by the membrane attack complex by disrupting formation of the complex. The protein is Stress-70 protein, mitochondrial of Homo sapiens (Human).